Here is a 488-residue protein sequence, read N- to C-terminus: 3-octaprenyl-4-hydroxybenzoate carboxy-lyase (488 aa).

A Mn(2+)-binding site is contributed by Asn172. Prenylated FMN-binding positions include 175-177, 189-191, and 194-195; these read IYR, RWL, and RG. Glu238 provides a ligand contact to Mn(2+). Residue Asp287 is the Proton donor of the active site.

Belongs to the UbiD family. Homohexamer. Prenylated FMN serves as cofactor. It depends on Mn(2+) as a cofactor.

It is found in the cell membrane. It catalyses the reaction a 4-hydroxy-3-(all-trans-polyprenyl)benzoate + H(+) = a 2-(all-trans-polyprenyl)phenol + CO2. Its pathway is cofactor biosynthesis; ubiquinone biosynthesis. Catalyzes the decarboxylation of 3-octaprenyl-4-hydroxy benzoate to 2-octaprenylphenol, an intermediate step in ubiquinone biosynthesis. In Legionella pneumophila (strain Lens), this protein is 3-octaprenyl-4-hydroxybenzoate carboxy-lyase.